A 156-amino-acid chain; its full sequence is Acyl carrier protein, mitochondrial (156 aa).

A mitochondrion-targeting transit peptide spans 1–68 (MASRVLSAYV…GRVTQLCRQY (68 aa)). Positions 77–152 (EGIQDRVLYV…EIVDYIADKK (76 aa)) constitute a Carrier domain. K88 bears the N6-acetyllysine mark. Residue S112 is modified to O-(pantetheine 4'-phosphoryl)serine.

The protein belongs to the acyl carrier protein (ACP) family. In terms of assembly, mammalian complex I is composed of 45 different subunits. Interacts with ETFRF1. Identified in a complex composed of MALSU1, MIEF1 upstream open reading frame protein and NDUFAB1; within the trimeric complex, MIEF1 upstream open reading frame protein functions as a bridging scaffold that interacts with MALSU1 on one side, and with NDUFAB1 on the other side. The complex interacts with the mitochondrial large ribosomal subunit. Interacts with alpha-1-microglobulin chain; this interaction is required for the maintenance of mitochondrial redox homeostasis. Component of the mitochondrial core iron-sulfur cluster (ISC) complex composed of NFS1, LYRM4, NDUFAB1, ISCU, FXN, and FDX2; this complex is a heterohexamer containing two copies of each monomer. Component of the cyteine desulfurase complex composed of NFS1, LYRM4 and NDUFAB1; this complex contributes to the stability and cysteine desulfurase activity of NFS1. In terms of processing, phosphopantetheinylation at Ser-112 is essential for interactions with LYR motif-containing proteins.

It is found in the mitochondrion. Functionally, carrier of the growing fatty acid chain in fatty acid biosynthesis. Accessory and non-catalytic subunit of the mitochondrial membrane respiratory chain NADH dehydrogenase (Complex I), which functions in the transfer of electrons from NADH to the respiratory chain. Accessory protein, of the core iron-sulfur cluster (ISC) assembly complex, that regulates, in association with LYRM4, the stability and the cysteine desulfurase activity of NFS1 and participates in the [2Fe-2S] clusters assembly on the scaffolding protein ISCU. The core iron-sulfur cluster (ISC) assembly complex is involved in the de novo synthesis of a [2Fe-2S] cluster, the first step of the mitochondrial iron-sulfur protein biogenesis. This process is initiated by the cysteine desulfurase complex (NFS1:LYRM4:NDUFAB1) that produces persulfide which is delivered on the scaffold protein ISCU in a FXN-dependent manner. Then this complex is stabilized by FDX2 which provides reducing equivalents to accomplish the [2Fe-2S] cluster assembly. Finally, the [2Fe-2S] cluster is transferred from ISCU to chaperone proteins, including HSCB, HSPA9 and GLRX5. The polypeptide is Acyl carrier protein, mitochondrial (Pongo pygmaeus (Bornean orangutan)).